Reading from the N-terminus, the 217-residue chain is Large ribosomal subunit protein uL3 (217 aa).

This sequence belongs to the universal ribosomal protein uL3 family. As to quaternary structure, part of the 50S ribosomal subunit. Forms a cluster with proteins L14 and L19.

One of the primary rRNA binding proteins, it binds directly near the 3'-end of the 23S rRNA, where it nucleates assembly of the 50S subunit. In Mycolicibacterium paratuberculosis (strain ATCC BAA-968 / K-10) (Mycobacterium paratuberculosis), this protein is Large ribosomal subunit protein uL3.